Here is a 110-residue protein sequence, read N- to C-terminus: Cyclin-dependent protein kinase inhibitor SMR8 (110 aa).

Interacts with CDKA-1 and D-type cyclins. Expressed in the root vascular tissue.

Probable cyclin-dependent protein kinase (CDK) inhibitor that functions as a repressor of mitosis in the endoreduplication cell cycle. This chain is Cyclin-dependent protein kinase inhibitor SMR8, found in Arabidopsis thaliana (Mouse-ear cress).